Consider the following 901-residue polypeptide: HTH-type transcriptional regulator MalT (901 aa).

S39–T46 contacts ATP. The HTH luxR-type domain occupies E829–L894. Residues N853–R872 constitute a DNA-binding region (H-T-H motif).

This sequence belongs to the MalT family. As to quaternary structure, monomer in solution. Oligomerizes to an active state in the presence of the positive effectors ATP and maltotriose.

With respect to regulation, activated by ATP and maltotriose, which are both required for DNA binding. Functionally, positively regulates the transcription of the maltose regulon whose gene products are responsible for uptake and catabolism of malto-oligosaccharides. Specifically binds to the promoter region of its target genes, recognizing a short DNA motif called the MalT box. This Escherichia coli O139:H28 (strain E24377A / ETEC) protein is HTH-type transcriptional regulator MalT.